Consider the following 125-residue polypeptide: Large ribosomal subunit protein bL12 (125 aa).

It belongs to the bacterial ribosomal protein bL12 family. As to quaternary structure, homodimer. Part of the ribosomal stalk of the 50S ribosomal subunit. Forms a multimeric L10(L12)X complex, where L10 forms an elongated spine to which 2 to 4 L12 dimers bind in a sequential fashion. Binds GTP-bound translation factors.

Forms part of the ribosomal stalk which helps the ribosome interact with GTP-bound translation factors. Is thus essential for accurate translation. The polypeptide is Large ribosomal subunit protein bL12 (Helicobacter pylori (strain P12)).